We begin with the raw amino-acid sequence, 32 residues long: MTSISDSQIIVILLSVFITSILALRLGKELYQ.

The helical transmembrane segment at 4–26 (ISDSQIIVILLSVFITSILALRL) threads the bilayer.

It belongs to the PsaM family.

It localises to the plastid. Its subcellular location is the chloroplast thylakoid membrane. This chain is Photosystem I reaction center subunit XII, found in Marchantia polymorpha (Common liverwort).